The chain runs to 81 residues: Large ribosomal subunit protein bL31B (81 aa).

The protein belongs to the bacterial ribosomal protein bL31 family. Type B subfamily. Part of the 50S ribosomal subunit.

The chain is Large ribosomal subunit protein bL31B from Lactococcus lactis subsp. cremoris (strain MG1363).